A 233-amino-acid polypeptide reads, in one-letter code: Large ribosomal subunit protein uL1 (233 aa).

The protein belongs to the universal ribosomal protein uL1 family. Part of the 50S ribosomal subunit.

Functionally, binds directly to 23S rRNA. The L1 stalk is quite mobile in the ribosome, and is involved in E site tRNA release. Protein L1 is also a translational repressor protein, it controls the translation of the L11 operon by binding to its mRNA. In Shewanella sediminis (strain HAW-EB3), this protein is Large ribosomal subunit protein uL1.